The chain runs to 1690 residues: Collagen alpha-4(IV) chain (1690 aa).

The first 38 residues, 1–38, serve as a signal peptide directing secretion; that stretch reads MWSLHIVLMRCSFRLTKSLATGPWSLILILFSVQYVYG. Residues 39–64 form a 7S domain region; sequence SGKKYIGPCGGRDCSVCHCVPEKGSR. Disordered regions lie at residues 61–173 and 187–258; these read KGSR…GEKG and GDRG…GPTL. A triple-helical region region spans residues 65–1459; sequence GPPGPPGPQG…IGDPGPKGFG (1395 aa). Residues 66–75 show a composition bias toward pro residues; it reads PPGPPGPQGP. Over residues 76 to 88 the composition is skewed to low complexity; sequence IGPLGAPGPIGLS. The Cell attachment site motif lies at 94–96; sequence RGD. Residue Asn-142 is glycosylated (N-linked (GlcNAc...) asparagine). The Cell attachment site signature appears at 145 to 147; the sequence is RGD. Residues 149–164 are compositionally biased toward gly residues; it reads GFPGGRGALGPGGPLG. Residues 189-191 carry the Cell attachment site motif; that stretch reads RGD. Residues 199-208 are compositionally biased toward gly residues; that stretch reads GSWGAGGPAG. The short motif at 310–312 is the Cell attachment site element; it reads RGD. 3 disordered regions span residues 369–390, 405–451, and 469–1457; these read PGDP…PGPP, GPPG…GLQG, and GIKG…GPKG. Residues 412–434 show a composition bias toward low complexity; that stretch reads FPGLPGLPGEAGIPGRPDSAPGK. Pro residues-rich tracts occupy residues 498-507 and 529-540; these read PMGPPGPPGL and PGPPGAEGPPGL. Basic and acidic residues predominate over residues 586–607; it reads HGRDGHAGEKGDPGPPGDHEDA. Low complexity predominate over residues 644–655; that stretch reads PGVPGHPGVRGP. Residue Asn-669 is glycosylated (N-linked (GlcNAc...) asparagine). Residues 681–690 are compositionally biased toward pro residues; it reads FDGPPGPKGF. 2 short sequence motifs (cell attachment site) span residues 724–726 and 785–787; these read RGD. The segment covering 849 to 858 has biased composition (gly residues); sequence GAPGGKGQPG. Composition is skewed to low complexity over residues 866 to 880 and 907 to 917; these read AGMK…RPGA and PRGLPGFPGFP. Positions 989–991 match the Cell attachment site motif; it reads RGD. Residues 1023–1032 are compositionally biased toward pro residues; the sequence is PGPPGPPGPP. Residues 1108–1117 show a composition bias toward low complexity; sequence PGIQGPRGSP. Pro residues predominate over residues 1119-1131; sequence RPGPPGSSGPPGC. Positions 1212–1214 match the Cell attachment site motif; it reads RGD. 5 stretches are compositionally biased toward pro residues: residues 1220–1243, 1256–1280, 1297–1309, 1338–1353, and 1443–1452; these read ISPP…PPGP, DPGP…PPGL, PGPP…PGPP, FPGP…PPGR, and GPGPPGPIGD. Residues 1465–1690 enclose the Collagen IV NC1 domain; the sequence is GFLLVLHSQT…SRCQVCVKYS (226 aa). Disulfide bonds link Cys-1480–Cys-1569, Cys-1513–Cys-1566, Cys-1525–Cys-1531, Cys-1588–Cys-1686, Cys-1622–Cys-1683, and Cys-1634–Cys-1641.

Belongs to the type IV collagen family. There are six type IV collagen isoforms, alpha 1(IV)-alpha 6(IV), each of which can form a triple helix structure with 2 other chains to generate type IV collagen network. The alpha 3(IV) chain forms a triple helical protomer with alpha 4(IV) and alpha 5(IV); this triple helical structure dimerizes through NC1-NC1 domain interactions such that the alpha 3(IV), alpha 4(IV) and alpha 5(IV) chains of one protomer connect with the alpha 5(IV), alpha 4(IV) and alpha 3(IV) chains of the opposite protomer, respectively. Associates with LAMB2 at the neuromuscular junction and in GBM. In terms of processing, prolines at the third position of the tripeptide repeating unit (G-X-Y) are hydroxylated in some or all of the chains. Post-translationally, type IV collagens contain numerous cysteine residues which are involved in inter- and intramolecular disulfide bonding. 12 of these, located in the NC1 domain, are conserved in all known type IV collagens. The trimeric structure of the NC1 domains is stabilized by covalent bonds between Lys and Met residues. Expressed in Bruch's membrane, outer plexiform layer, inner nuclear layer, inner plexiform layer, ganglion cell layer, inner limiting membrane and around the blood vessels of the retina (at protein level). Alpha 3 and alpha 4 type IV collagens are colocalized and present in kidney, eye, basement membranes of lens capsule, cochlea, lung, skeletal muscle, aorta, synaptic fibers, fetal kidney and fetal lung. PubMed:8083201 reports similar levels of expression of alpha 3 and alpha 4 type IV collagens in kidney, but PubMed:7523402 reports that in kidney levels of alpha 3 type IV collagen are significantly lower than those of alpha 4 type IV collagen. Highest levels of expression of alpha 4 type IV collagen are detected in kidney, calvaria, neuroretina and cardiac muscle. Lower levels of expression are observed in brain, lung and thymus, and no expression is detected in choroid plexus, liver, adrenal, pancreas, ileum or skin.

The protein resides in the secreted. It is found in the extracellular space. Its subcellular location is the extracellular matrix. The protein localises to the basement membrane. Its function is as follows. Type IV collagen is the major structural component of glomerular basement membranes (GBM), forming a 'chicken-wire' meshwork together with laminins, proteoglycans and entactin/nidogen. This Homo sapiens (Human) protein is Collagen alpha-4(IV) chain (COL4A4).